We begin with the raw amino-acid sequence, 285 residues long: MAHVIDGKAIAQSVREELRMEVERLKLNHQLTPGLAVVLVGADPASQVYVRNKKRACETAGIASFSHELAATTSQAELLALIEQLNQDDAVHGILVQLPLPKHIDEQKVLEAISPSKDADGFHPYNVGRLVTGDPTFQPCTPWGVMEMLKVSGVDPKGKHAVVIGRSNIVGKPVALMLLAAHATVTICHSRTPDLAETVKRADIVVAAVGRANMVPGSWIKKGAVVIDVGINRGEDGKLCGDVDYASCFEHASAITPVPGGVGPMTIAMLLKNTVEGAKRAHNIA.

NADP(+) contacts are provided by residues 165–167, serine 190, and isoleucine 231; that span reads GRS.

Belongs to the tetrahydrofolate dehydrogenase/cyclohydrolase family. In terms of assembly, homodimer.

The catalysed reaction is (6R)-5,10-methylene-5,6,7,8-tetrahydrofolate + NADP(+) = (6R)-5,10-methenyltetrahydrofolate + NADPH. It carries out the reaction (6R)-5,10-methenyltetrahydrofolate + H2O = (6R)-10-formyltetrahydrofolate + H(+). The protein operates within one-carbon metabolism; tetrahydrofolate interconversion. In terms of biological role, catalyzes the oxidation of 5,10-methylenetetrahydrofolate to 5,10-methenyltetrahydrofolate and then the hydrolysis of 5,10-methenyltetrahydrofolate to 10-formyltetrahydrofolate. This chain is Bifunctional protein FolD, found in Magnetococcus marinus (strain ATCC BAA-1437 / JCM 17883 / MC-1).